The primary structure comprises 99 residues: Integration host factor subunit alpha (99 aa).

The protein belongs to the bacterial histone-like protein family. In terms of assembly, heterodimer of an alpha and a beta chain.

Its function is as follows. This protein is one of the two subunits of integration host factor, a specific DNA-binding protein that functions in genetic recombination as well as in transcriptional and translational control. The protein is Integration host factor subunit alpha (ihfA) of Xanthomonas axonopodis pv. citri (strain 306).